Consider the following 453-residue polypeptide: Trigger factor (453 aa).

The PPIase FKBP-type domain maps to 171 to 256 (GDRVTINFKG…ATSIEAPQDI (86 aa)).

It belongs to the FKBP-type PPIase family. Tig subfamily.

It localises to the cytoplasm. The enzyme catalyses [protein]-peptidylproline (omega=180) = [protein]-peptidylproline (omega=0). Its function is as follows. Involved in protein export. Acts as a chaperone by maintaining the newly synthesized protein in an open conformation. Functions as a peptidyl-prolyl cis-trans isomerase. In Bradyrhizobium diazoefficiens (strain JCM 10833 / BCRC 13528 / IAM 13628 / NBRC 14792 / USDA 110), this protein is Trigger factor.